Reading from the N-terminus, the 301-residue chain is Acetylglutamate kinase (301 aa).

Residues 72 to 73 (GG), Arg94, and Asn199 contribute to the substrate site.

The protein belongs to the acetylglutamate kinase family. ArgB subfamily.

The protein resides in the cytoplasm. The catalysed reaction is N-acetyl-L-glutamate + ATP = N-acetyl-L-glutamyl 5-phosphate + ADP. It functions in the pathway amino-acid biosynthesis; L-arginine biosynthesis; N(2)-acetyl-L-ornithine from L-glutamate: step 2/4. Its function is as follows. Catalyzes the ATP-dependent phosphorylation of N-acetyl-L-glutamate. The polypeptide is Acetylglutamate kinase (Bartonella bacilliformis (strain ATCC 35685 / KC583 / Herrer 020/F12,63)).